The sequence spans 212 residues: Thymidylate kinase (212 aa).

An ATP-binding site is contributed by 7-14 (GIEGCGKS).

It belongs to the thymidylate kinase family.

The catalysed reaction is dTMP + ATP = dTDP + ADP. In terms of biological role, phosphorylation of dTMP to form dTDP in both de novo and salvage pathways of dTTP synthesis. In Trichlorobacter lovleyi (strain ATCC BAA-1151 / DSM 17278 / SZ) (Geobacter lovleyi), this protein is Thymidylate kinase.